The primary structure comprises 327 residues: MPHLADLVVQAKADIERSQDIEALELVRVEYLGKKGHFTQQMTALRDLAPDARPAAGAVINQAKQDVQQALAERKATLEGAALEAWLAAETLDVSLPGRRMENGGLHPVSRTIARIEHFFGELGFSVATGPEIEDNYHNFDALNIPAHHPARADHDTFWFDATRLLRTQTSGVQIRTMKAQPPPIRIIAPGRVYRNDYDQTHTPMFHQMEGLIIDTDISFTNLKGTLHDFLRNFFEEDLQVRFRPSYFPFTEPSAEVDVMGKNGRWLEVLGCGMVHPNVLRNVGIDPEIYSGFAFGMGMERLTMLRYGVMDLRAFFENDLRFLKQFK.

A Mg(2+)-binding site is contributed by glutamate 252.

The protein belongs to the class-II aminoacyl-tRNA synthetase family. Phe-tRNA synthetase alpha subunit type 1 subfamily. In terms of assembly, tetramer of two alpha and two beta subunits. It depends on Mg(2+) as a cofactor.

It localises to the cytoplasm. The enzyme catalyses tRNA(Phe) + L-phenylalanine + ATP = L-phenylalanyl-tRNA(Phe) + AMP + diphosphate + H(+). The protein is Phenylalanine--tRNA ligase alpha subunit of Sodalis glossinidius (strain morsitans).